The chain runs to 192 residues: MARFMGPRFKLARHLGVNVFGHPKALNRGVKQHKLSEYGEQLLEKQKLRAYYGVLEKQFKKIVFNALKSKEKSEDILVQSLERRLDNLVYRLGFGSTLREARQMVSHGHILVNGQKVDIPSYKVNIGDEVSLRSKSRKIQTYASNFTTIIPAVTYIEKDTESFSGRLIRLPKSVEVPVMVKYSKVLEFYSKN.

One can recognise an S4 RNA-binding domain in the interval Arg83–Asn145.

It belongs to the universal ribosomal protein uS4 family. In terms of assembly, part of the 30S ribosomal subunit. Contacts protein S5. The interaction surface between S4 and S5 is involved in control of translational fidelity.

Functionally, one of the primary rRNA binding proteins, it binds directly to 16S rRNA where it nucleates assembly of the body of the 30S subunit. Its function is as follows. With S5 and S12 plays an important role in translational accuracy. This is Small ribosomal subunit protein uS4B (rpsD2) from Clostridium acetobutylicum (strain ATCC 824 / DSM 792 / JCM 1419 / IAM 19013 / LMG 5710 / NBRC 13948 / NRRL B-527 / VKM B-1787 / 2291 / W).